Consider the following 78-residue polypeptide: DNA-directed RNA polymerase subunit omega (78 aa).

This sequence belongs to the RNA polymerase subunit omega family. In cyanobacteria the RNAP catalytic core is composed of 2 alpha, 1 beta, 1 beta', 1 gamma and 1 omega subunit. When a sigma factor is associated with the core the holoenzyme is formed, which can initiate transcription.

The catalysed reaction is RNA(n) + a ribonucleoside 5'-triphosphate = RNA(n+1) + diphosphate. Functionally, promotes RNA polymerase assembly. Latches the N- and C-terminal regions of the beta' subunit thereby facilitating its interaction with the beta and alpha subunits. The polypeptide is DNA-directed RNA polymerase subunit omega (Trichormus variabilis (strain ATCC 29413 / PCC 7937) (Anabaena variabilis)).